The following is a 104-amino-acid chain: UPF0145 protein cbdbA1711 (104 aa).

This sequence belongs to the UPF0145 family.

The polypeptide is UPF0145 protein cbdbA1711 (Dehalococcoides mccartyi (strain CBDB1)).